A 284-amino-acid chain; its full sequence is MKLCDFEVGLDKPFFLIAGTCVVESEQMTIDTAGRLKEICAKLNIPFIYKSSYDKANRSSGKSFRGLGMDEGLRILSEVKRQLGLPVLTDVHSIDEIEQVASVVDVLQTPAFLCRQTDFIHACARSGKPVNIKKGQFLAPHDMKNVIDKARDAAREAGLSEDRFMACERGVSFGYNNLVSDMRSLAIMRETNAPVVFDATHSVQLPGGQGTSSGGQREFVPVLARAAVATGVAGLFMETHPNPAEAKSDGPNAVPLNRMSALLETLVTLDQAVKRGPFLENDFN.

Belongs to the KdsA family.

It localises to the cytoplasm. It catalyses the reaction D-arabinose 5-phosphate + phosphoenolpyruvate + H2O = 3-deoxy-alpha-D-manno-2-octulosonate-8-phosphate + phosphate. It functions in the pathway carbohydrate biosynthesis; 3-deoxy-D-manno-octulosonate biosynthesis; 3-deoxy-D-manno-octulosonate from D-ribulose 5-phosphate: step 2/3. It participates in bacterial outer membrane biogenesis; lipopolysaccharide biosynthesis. This chain is 2-dehydro-3-deoxyphosphooctonate aldolase, found in Burkholderia multivorans (strain ATCC 17616 / 249).